The following is a 528-amino-acid chain: MESAAALHFSRPASLLLLLLLSLCALVSAQVTVVGPTDPILGMVGENTTLRCHLSPEKNAEDMEVRWFRSQFSPAVFVYKGGRERTEEQMEEYRGRTTFVSKDISRGSVALVIHNITAQENGTYRCYFQEGRSYDEAILHLIVAGLGSKPLIEMRGHEDGGIRLECISRGWYPKPLTVWRDPYGGVVPALKEVSMPDADSLFMVTTAVIIRDKSVRNMFCSINNTLLSQKKESVIFIPESFMPSVSPCAVALPIVVVILMILFAVCMYWINKLQKEKKILSGEKEFERETREIAVKELEKERVQKEEELQVKEKLQEELRWRRTFLHAVDVVLDPDTAHPDLFLSEDRRSVRRRPFRHLGESMPDNPERFNSQPCVLGRESFASGKHYWEVEVENVIEWTVGVCRDSVERKGEVLLIPQNGFWTLEMHKSQYRAVSSPDRIIPLKESLCRVGVFLDYEAGDVSFYNMRDRSHIYTCPRSAFSVPVRPFFRLGCEDSPIFICPALTGANGVTVPEEGLTLHRVGTHQSL.

The first 29 residues, 1–29 (MESAAALHFSRPASLLLLLLLSLCALVSA), serve as a signal peptide directing secretion. The Extracellular segment spans residues 30-249 (QVTVVGPTDP…SFMPSVSPCA (220 aa)). One can recognise an Ig-like V-type domain in the interval 31–142 (VTVVGPTDPI…SYDEAILHLI (112 aa)). 3 N-linked (GlcNAc...) asparagine glycosylation sites follow: Asn47, Asn115, and Asn121. Cys52 and Cys126 are oxidised to a cystine. Residues 150–232 (PLIEMRGHED…NNTLLSQKKE (83 aa)) enclose the Ig-like C2-type domain. The helical transmembrane segment at 250-270 (VALPIVVVILMILFAVCMYWI) threads the bilayer. The stretch at 270–320 (INKLQKEKKILSGEKEFERETREIAVKELEKERVQKEEELQVKEKLQEELR) forms a coiled coil. The Cytoplasmic segment spans residues 271–528 (NKLQKEKKIL…LHRVGTHQSL (258 aa)). In terms of domain architecture, B30.2/SPRY spans 311 to 507 (VKEKLQEELR…IFICPALTGA (197 aa)).

The protein belongs to the immunoglobulin superfamily. BTN/MOG family. Post-translationally, N-glycosylated.

The protein resides in the membrane. Its function is as follows. Inhibits the proliferation of CD4 and CD8 T-cells activated by anti-CD3 antibodies, T-cell metabolism and IL2 and IFNG secretion. The polypeptide is Butyrophilin subfamily 2 member A2 (BTN2A2) (Pongo abelii (Sumatran orangutan)).